The sequence spans 240 residues: Probable transcriptional regulatory protein HP_0162 (240 aa).

Belongs to the TACO1 family.

Its subcellular location is the cytoplasm. In Helicobacter pylori (strain ATCC 700392 / 26695) (Campylobacter pylori), this protein is Probable transcriptional regulatory protein HP_0162.